The chain runs to 185 residues: Comitin (185 aa).

The region spanning 1 to 123 (MELLRQGEHL…YKQILYSSKP (123 aa)) is the Bulb-type lectin domain. Residues 138-185 (SGHPQSAYPPQQPGYGYPAQPGYPPQPGYPPQHGYPPQHGYPQQPGYY) form a disordered region. The segment covering 141 to 157 (PQSAYPPQQPGYGYPAQ) has biased composition (low complexity). 5 consecutive repeat copies span residues 153 to 158 (GYPAQP), 159 to 164 (GYPPQP), 165 to 170 (GYPPQH), 171 to 176 (GYPPQH), and 177 to 182 (GYPQQP). Residues 153–182 (GYPAQPGYPPQPGYPPQHGYPPQHGYPQQP) form a 5 X 6 AA tandem repeats of G-Y-P-X-Q-[PH] region. Over residues 158-171 (PGYPPQPGYPPQHG) the composition is skewed to pro residues. Over residues 172 to 185 (YPPQHGYPQQPGYY) the composition is skewed to low complexity.

In terms of assembly, homodimer in solution. The N-terminus is blocked.

Its subcellular location is the golgi apparatus membrane. It localises to the endomembrane system. The protein resides in the cytoplasm. The protein localises to the cytoskeleton. May have a role in cell motility. It has high affinity for both G-actin and F-actin. Binds to vesicle membranes via mannose residues and, by way of its interaction with actin, links these membranes to the cytoskeleton. The sequence is that of Comitin (comA) from Dictyostelium discoideum (Social amoeba).